Consider the following 200-residue polypeptide: Potassium-transporting ATPase KdpC subunit (200 aa).

A helical membrane pass occupies residues 7–27 (PALVMIVLFTILTGLIYPLAM).

It belongs to the KdpC family. As to quaternary structure, the system is composed of three essential subunits: KdpA, KdpB and KdpC.

It is found in the cell inner membrane. In terms of biological role, part of the high-affinity ATP-driven potassium transport (or Kdp) system, which catalyzes the hydrolysis of ATP coupled with the electrogenic transport of potassium into the cytoplasm. This subunit acts as a catalytic chaperone that increases the ATP-binding affinity of the ATP-hydrolyzing subunit KdpB by the formation of a transient KdpB/KdpC/ATP ternary complex. The polypeptide is Potassium-transporting ATPase KdpC subunit (Methylocella silvestris (strain DSM 15510 / CIP 108128 / LMG 27833 / NCIMB 13906 / BL2)).